The primary structure comprises 165 residues: Large ribosomal subunit protein uL10 (165 aa).

Belongs to the universal ribosomal protein uL10 family. Part of the ribosomal stalk of the 50S ribosomal subunit. The N-terminus interacts with L11 and the large rRNA to form the base of the stalk. The C-terminus forms an elongated spine to which L12 dimers bind in a sequential fashion forming a multimeric L10(L12)X complex.

Its function is as follows. Forms part of the ribosomal stalk, playing a central role in the interaction of the ribosome with GTP-bound translation factors. The chain is Large ribosomal subunit protein uL10 from Yersinia pseudotuberculosis serotype IB (strain PB1/+).